The primary structure comprises 371 residues: Vasopressin V2 receptor (371 aa).

Residues 1 to 30 are disordered; that stretch reads MLMASTTSAVPGHPSLPSLPSNSSQERPLD. The Extracellular segment spans residues 1-38; that stretch reads MLMASTTSAVPGHPSLPSLPSNSSQERPLDTRDPLLAR. Low complexity predominate over residues 15 to 24; it reads SLPSLPSNSS. The N-linked (GlcNAc...) asparagine glycan is linked to Asn22. A helical membrane pass occupies residues 39 to 63; the sequence is AELALLSIVFVAVALSNGLVLAALA. At 64–77 the chain is on the cytoplasmic side; sequence RRGRRGHWAPIHVF. A helical membrane pass occupies residues 78 to 98; the sequence is IGHLCLADLAVALFQVLPQLA. Residues 99–113 are Extracellular-facing; the sequence is WKATDRFRGPDALCR. Residues 114-135 form a helical membrane-spanning segment; that stretch reads AVKYLQMVGMYASSYMILAMTL. The Cytoplasmic portion of the chain corresponds to 136–159; it reads DRHRAICRPMLAYRHGSGAHWNRP. A helical transmembrane segment spans residues 160-180; it reads VLVAWAFSLLLSLPQLFIFAQ. At 181–200 the chain is on the extracellular side; the sequence is RNVEGGSGVTDCWACFAEPW. The chain crosses the membrane as a helical span at residues 201–220; the sequence is GRRTYVTWIALMVFVAPTLG. Residues 221–271 lie on the Cytoplasmic side of the membrane; sequence IAACQVLIFREIHASLVPGPSERPGGRRRGRRTGSPGEGAHVSAAVAKTVR. The tract at residues 240–259 is disordered; the sequence is PSERPGGRRRGRRTGSPGEG. Residues 272 to 293 form a helical membrane-spanning segment; it reads MTLVIVVVYVLCWAPFFLVQLW. The Extracellular portion of the chain corresponds to 294–308; sequence AAWDPEAPLEGAPFV. A helical transmembrane segment spans residues 309–328; it reads LLMLLASLNSCTNPWIYASF. The Cytoplasmic segment spans residues 329-371; that stretch reads SSSVSSELRSLLCCARGRTPPSLGPQDESCTTASSSLAKDTSS. Residues Cys341 and Cys342 are each lipidated (S-palmitoyl cysteine). Positions 349–371 are disordered; it reads PSLGPQDESCTTASSSLAKDTSS. A compositionally biased stretch (polar residues) spans 356–371; that stretch reads ESCTTASSSLAKDTSS.

Belongs to the G-protein coupled receptor 1 family. Vasopressin/oxytocin receptor subfamily. Interacts with ARRDC4. Identified in a complex containing at least ARRDC4, V2R and HGS. Interacts with TMEM147. In terms of tissue distribution, kidney.

The protein resides in the cell membrane. Receptor for arginine vasopressin. The activity of this receptor is mediated by G proteins which activate adenylate cyclase. Involved in renal water reabsorption. In Homo sapiens (Human), this protein is Vasopressin V2 receptor (AVPR2).